The chain runs to 501 residues: 2,3-bisphosphoglycerate-independent phosphoglycerate mutase (501 aa).

Aspartate 12 and serine 62 together coordinate Mn(2+). Serine 62 acts as the Phosphoserine intermediate in catalysis. Substrate contacts are provided by residues histidine 121, 150–151 (RD), arginine 182, arginine 188, 253–256 (RSDR), and lysine 322. Mn(2+) is bound by residues aspartate 389, histidine 393, aspartate 430, histidine 431, and histidine 449.

This sequence belongs to the BPG-independent phosphoglycerate mutase family. Monomer. The cofactor is Mn(2+).

It catalyses the reaction (2R)-2-phosphoglycerate = (2R)-3-phosphoglycerate. The protein operates within carbohydrate degradation; glycolysis; pyruvate from D-glyceraldehyde 3-phosphate: step 3/5. Catalyzes the interconversion of 2-phosphoglycerate and 3-phosphoglycerate. This chain is 2,3-bisphosphoglycerate-independent phosphoglycerate mutase, found in Ehrlichia ruminantium (strain Gardel).